Consider the following 315-residue polypeptide: GPN-loop GTPase 2 (315 aa).

12 to 17 (GSGKST) provides a ligand contact to GTP. The short motif at 69–71 (GPN) is the Gly-Pro-Asn (GPN)-loop; involved in dimer interface element. A GTP-binding site is contributed by 172–175 (SKAD).

Belongs to the GPN-loop GTPase family. As to quaternary structure, heterodimers with gpn1 or fet5/gpn3. Binds to RNA polymerase II (RNAPII).

Its subcellular location is the cytoplasm. The protein resides in the nucleus. Small GTPase required for proper nuclear import of RNA polymerase II and III (RNAPII and RNAPIII). May act at an RNAP assembly step prior to nuclear import. This chain is GPN-loop GTPase 2, found in Schizosaccharomyces pombe (strain 972 / ATCC 24843) (Fission yeast).